The chain runs to 287 residues: Lipoyl synthase (287 aa).

Cys34, Cys39, Cys45, Cys60, Cys64, Cys67, and Ser273 together coordinate [4Fe-4S] cluster. The Radical SAM core domain maps to 46–262; the sequence is WNKRHATVMI…KYIAYSKGFL (217 aa).

It belongs to the radical SAM superfamily. Lipoyl synthase family. Requires [4Fe-4S] cluster as cofactor.

The protein localises to the cytoplasm. It carries out the reaction [[Fe-S] cluster scaffold protein carrying a second [4Fe-4S](2+) cluster] + N(6)-octanoyl-L-lysyl-[protein] + 2 oxidized [2Fe-2S]-[ferredoxin] + 2 S-adenosyl-L-methionine + 4 H(+) = [[Fe-S] cluster scaffold protein] + N(6)-[(R)-dihydrolipoyl]-L-lysyl-[protein] + 4 Fe(3+) + 2 hydrogen sulfide + 2 5'-deoxyadenosine + 2 L-methionine + 2 reduced [2Fe-2S]-[ferredoxin]. Its pathway is protein modification; protein lipoylation via endogenous pathway; protein N(6)-(lipoyl)lysine from octanoyl-[acyl-carrier-protein]: step 2/2. In terms of biological role, catalyzes the radical-mediated insertion of two sulfur atoms into the C-6 and C-8 positions of the octanoyl moiety bound to the lipoyl domains of lipoate-dependent enzymes, thereby converting the octanoylated domains into lipoylated derivatives. This is Lipoyl synthase from Wolbachia pipientis wMel.